The chain runs to 157 residues: SsrA-binding protein (157 aa).

Basic and acidic residues predominate over residues 138-151; sequence ATEAKRDWGREKQR. Residues 138–157 are disordered; sequence ATEAKRDWGREKQRLLKQHS.

The protein belongs to the SmpB family.

The protein resides in the cytoplasm. Functionally, required for rescue of stalled ribosomes mediated by trans-translation. Binds to transfer-messenger RNA (tmRNA), required for stable association of tmRNA with ribosomes. tmRNA and SmpB together mimic tRNA shape, replacing the anticodon stem-loop with SmpB. tmRNA is encoded by the ssrA gene; the 2 termini fold to resemble tRNA(Ala) and it encodes a 'tag peptide', a short internal open reading frame. During trans-translation Ala-aminoacylated tmRNA acts like a tRNA, entering the A-site of stalled ribosomes, displacing the stalled mRNA. The ribosome then switches to translate the ORF on the tmRNA; the nascent peptide is terminated with the 'tag peptide' encoded by the tmRNA and targeted for degradation. The ribosome is freed to recommence translation, which seems to be the essential function of trans-translation. This is SsrA-binding protein from Cereibacter sphaeroides (strain ATCC 17025 / ATH 2.4.3) (Rhodobacter sphaeroides).